An 81-amino-acid polypeptide reads, in one-letter code: ATP synthase subunit c, chloroplastic (81 aa).

The next 2 membrane-spanning stretches (helical) occupy residues Pro3–Gly23 and Leu57–Ala77.

The protein belongs to the ATPase C chain family. In terms of assembly, F-type ATPases have 2 components, F(1) - the catalytic core - and F(0) - the membrane proton channel. F(1) has five subunits: alpha(3), beta(3), gamma(1), delta(1), epsilon(1). F(0) has four main subunits: a(1), b(1), b'(1) and c(10-14). The alpha and beta chains form an alternating ring which encloses part of the gamma chain. F(1) is attached to F(0) by a central stalk formed by the gamma and epsilon chains, while a peripheral stalk is formed by the delta, b and b' chains.

The protein resides in the plastid. The protein localises to the chloroplast thylakoid membrane. Its function is as follows. F(1)F(0) ATP synthase produces ATP from ADP in the presence of a proton or sodium gradient. F-type ATPases consist of two structural domains, F(1) containing the extramembraneous catalytic core and F(0) containing the membrane proton channel, linked together by a central stalk and a peripheral stalk. During catalysis, ATP synthesis in the catalytic domain of F(1) is coupled via a rotary mechanism of the central stalk subunits to proton translocation. In terms of biological role, key component of the F(0) channel; it plays a direct role in translocation across the membrane. A homomeric c-ring of between 10-14 subunits forms the central stalk rotor element with the F(1) delta and epsilon subunits. The protein is ATP synthase subunit c, chloroplastic of Phaseolus vulgaris (Kidney bean).